The chain runs to 510 residues: Histidine ammonia-lyase (510 aa).

The segment at residues 143–145 (ASG) is a cross-link (5-imidazolinone (Ala-Gly)). 2,3-didehydroalanine (Ser) is present on serine 144.

This sequence belongs to the PAL/histidase family. In terms of processing, contains an active site 4-methylidene-imidazol-5-one (MIO), which is formed autocatalytically by cyclization and dehydration of residues Ala-Ser-Gly.

It is found in the cytoplasm. It carries out the reaction L-histidine = trans-urocanate + NH4(+). Its pathway is amino-acid degradation; L-histidine degradation into L-glutamate; N-formimidoyl-L-glutamate from L-histidine: step 1/3. This chain is Histidine ammonia-lyase, found in Aliivibrio fischeri (strain MJ11) (Vibrio fischeri).